Here is a 274-residue protein sequence, read N- to C-terminus: NAD-dependent protein deacetylase (274 aa).

The 274-residue stretch at 1–274 folds into the Deacetylase sirtuin-type domain; sequence MDSRMSDLQA…CDEVLAEVVP (274 aa). NAD(+)-binding positions include 26–46 and 104–107; these read GAGCSTASGIPDYRDGQGQWK and QNVD. H122 serves as the catalytic Proton acceptor. Residues C130, C133, C181, and C184 each coordinate Zn(2+). NAD(+)-binding positions include 221 to 223, 247 to 249, and C265; these read GSS and NLG.

This sequence belongs to the sirtuin family. Class II subfamily. Zn(2+) serves as cofactor.

The protein localises to the cytoplasm. It catalyses the reaction N(6)-acetyl-L-lysyl-[protein] + NAD(+) + H2O = 2''-O-acetyl-ADP-D-ribose + nicotinamide + L-lysyl-[protein]. Its function is as follows. NAD-dependent protein deacetylase which modulates the activities of several enzymes which are inactive in their acetylated form. This is NAD-dependent protein deacetylase from Bordetella pertussis (strain Tohama I / ATCC BAA-589 / NCTC 13251).